Consider the following 92-residue polypeptide: uncharacterized protein (92 aa).

This sequence belongs to the IUNH family.

This is an uncharacterized protein from Corynebacterium ammoniagenes (Brevibacterium ammoniagenes).